Consider the following 893-residue polypeptide: UPF0182 protein CLB_0018 (893 aa).

7 consecutive transmembrane segments (helical) span residues 9 to 29 (IPLF…NFII), 49 to 69 (AIII…WMYY), 94 to 114 (LFFI…SSSY), 154 to 174 (VIIS…FILE), 202 to 222 (LAIV…IKIW), 246 to 266 (FYKI…LSIV), and 273 to 293 (VSIC…ASFL).

Belongs to the UPF0182 family.

It localises to the cell membrane. This is UPF0182 protein CLB_0018 from Clostridium botulinum (strain ATCC 19397 / Type A).